Reading from the N-terminus, the 592-residue chain is Potassium-transporting ATPase potassium-binding subunit (592 aa).

The next 11 membrane-spanning stretches (helical) occupy residues 7-27 (LQTV…GTFM), 71-91 (VLFN…QHLL), 136-156 (GLTV…IAVI), 179-199 (LYIL…QGVI), 287-307 (LEIL…GAMV), 314-334 (WTLL…LQGV), 411-431 (GLYT…LMIG), 449-469 (SVVT…IAMI), 473-493 (AVAA…YAFA), 515-535 (ILGA…VLAM), and 559-579 (FALW…FPAL).

It belongs to the KdpA family. As to quaternary structure, the system is composed of three essential subunits: KdpA, KdpB and KdpC.

The protein resides in the cell inner membrane. Part of the high-affinity ATP-driven potassium transport (or Kdp) system, which catalyzes the hydrolysis of ATP coupled with the electrogenic transport of potassium into the cytoplasm. This subunit binds the periplasmic potassium ions and delivers the ions to the membrane domain of KdpB through an intramembrane tunnel. The chain is Potassium-transporting ATPase potassium-binding subunit from Geobacter sulfurreducens (strain ATCC 51573 / DSM 12127 / PCA).